A 168-amino-acid polypeptide reads, in one-letter code: Aphid transmission protein (168 aa).

Belongs to the caulimoviridae ORF II family.

This protein is involved in virus transmission. In Carnation etched ring virus (CERV), this protein is Aphid transmission protein.